The chain runs to 222 residues: Glutathione-specific gamma-glutamylcyclotransferase 1 (222 aa).

The disordered stretch occupies residues 1-25 (MKQESAAQSTPPPSLSPAPSAQPSW). 35 to 40 (IFGYGS) provides a ligand contact to substrate. Glu-115 serves as the catalytic Proton acceptor.

This sequence belongs to the gamma-glutamylcyclotransferase family. ChaC subfamily. As to quaternary structure, interacts with NOTCH1 (via extracellular region).

Its subcellular location is the cytoplasm. It is found in the cytosol. It localises to the golgi apparatus. The protein resides in the trans-Golgi network. It carries out the reaction glutathione = L-cysteinylglycine + 5-oxo-L-proline. Catalyzes the cleavage of glutathione into 5-oxo-L-proline and a Cys-Gly dipeptide. Acts specifically on glutathione, but not on other gamma-glutamyl peptides. Glutathione depletion is an important factor for apoptosis initiation and execution. Acts as a pro-apoptotic component of the unfolded protein response pathway by mediating the pro-apoptotic effects of the ATF4-ATF3-DDIT3/CHOP cascade. Negative regulator of Notch signaling pathway involved in embryonic neurogenesis: acts by inhibiting Notch cleavage by furin, maintaining Notch in an immature inactive form, thereby promoting neurogenesis in embryos. The chain is Glutathione-specific gamma-glutamylcyclotransferase 1 from Rattus norvegicus (Rat).